A 493-amino-acid chain; its full sequence is Xylulose kinase (493 aa).

Gln-84 to His-85 serves as a coordination point for substrate. Asp-247 acts as the Proton acceptor in catalysis.

This sequence belongs to the FGGY kinase family.

The catalysed reaction is D-xylulose + ATP = D-xylulose 5-phosphate + ADP + H(+). Its function is as follows. Catalyzes the phosphorylation of D-xylulose to D-xylulose 5-phosphate. This is Xylulose kinase from Haemophilus influenzae (strain ATCC 51907 / DSM 11121 / KW20 / Rd).